Consider the following 704-residue polypeptide: Meprin A subunit beta (704 aa).

Positions 1–20 (MDARHWPWFLVFATFLLVSG) are cleaved as a signal peptide. Positions 21 to 64 (LPAPEKFVKDIDGGIDQDIFDINEDLGLDLFEGDIKLEASGRNS) are excised as a propeptide. Over 21–654 (LPAPEKFVKD…RCEKRGSTKD (634 aa)) the chain is Extracellular. One can recognise a Peptidase M12A domain in the interval 63 to 257 (NSIIGDNYRW…LKLNQLYSCT (195 aa)). 3 disulfide bridges follow: Cys104–Cys256, Cys125–Cys145, and Cys266–Cys428. His153 provides a ligand contact to Zn(2+). Residue Glu154 is part of the active site. The Zn(2+) site is built by His157 and His163. Asn193, Asn219, Asn316, Asn422, Asn437, Asn528, Asn547, and Asn592 each carry an N-linked (GlcNAc...) asparagine glycan. The MAM domain maps to 261-430 (SFMDSCDFEL…INLSETRCPH (170 aa)). Residues 431–585 (HIWHIQNFTQ…GDDVYILLTV (155 aa)) form the MATH domain. Residues 607 to 647 (VHNACSEVECQNGGICTLQEGRAECKCPAGEDWWYMGKRCE) enclose the EGF-like domain. 3 cysteine pairs are disulfide-bonded: Cys611–Cys622, Cys616–Cys631, and Cys633–Cys646. Residues 655–678 (TIVIAVSSTVTVFAVMLIITLISV) form a helical membrane-spanning segment. Over 679 to 704 (YCTRRKYRKKASAKTAAMNLENQHAF) the chain is Cytoplasmic. Thr693 carries the post-translational modification Phosphothreonine.

As to quaternary structure, homotetramer consisting of disulfide-linked beta subunits, or heterotetramer of two alpha and two beta subunits formed by non-covalent association of two disulfide-linked heterodimers. Interacts with MBL2 through its carbohydrate moiety. This interaction may inhibit its catalytic activity. Interacts with TSPAN8. Zn(2+) is required as a cofactor. N-glycosylated; contains high mannose and/or complex biantennary structures. In terms of processing, proteolytically activated by trypsin in the intestinal lumen and kallikrein-related peptidases in other tissues. Post-translationally, phosphorylated by PKC at multiple sites of its cytoplasmic part. Phosphorylation dcreases activity at the cell surface, leading to diminished substrate cleavage. In terms of tissue distribution, kidney, intestinal brush borders and salivary ducts.

It localises to the cell membrane. Its subcellular location is the secreted. The catalysed reaction is Hydrolysis of proteins, including azocasein, and peptides. Hydrolysis of 5-His-|-Leu-6, 6-Leu-|-Cys-7, 14-Ala-|-Leu-15 and 19-Cys-|-Gly-20 bonds in insulin B chain.. With respect to regulation, strongly inhibited by fetuin-A/AHSG. Its function is as follows. Membrane metallopeptidase that sheds many membrane-bound proteins. Exhibits a strong preference for acidic amino acids at the P1' position. Known substrates include: FGF19, VGFA, IL1B, IL18, procollagen I and III, E-cadherin, KLK7, gastrin, ADAM10, tenascin-C. The presence of several pro-inflammatory cytokine among substrates implicate MEP1B in inflammation. It is also involved in tissue remodeling due to its capability to degrade extracellular matrix components. The sequence is that of Meprin A subunit beta (Mep1b) from Rattus norvegicus (Rat).